The sequence spans 78 residues: UPF0291 protein ABC2165 (78 aa).

The tract at residues 56–78 (AKGNDVTPQKLKDSKAQKHKRLH) is disordered.

Belongs to the UPF0291 family.

The protein localises to the cytoplasm. The polypeptide is UPF0291 protein ABC2165 (Shouchella clausii (strain KSM-K16) (Alkalihalobacillus clausii)).